Consider the following 236-residue polypeptide: UPF0257 lipoprotein YnfC (236 aa).

A signal peptide spans 1 to 16 (MKKPLLLTLLCMILAG). The N-palmitoyl cysteine moiety is linked to residue Cys17. Cys17 carries the S-diacylglycerol cysteine lipid modification.

Belongs to the UPF0257 family.

The protein localises to the cell membrane. The polypeptide is UPF0257 lipoprotein YnfC (Salmonella paratyphi C (strain RKS4594)).